A 439-amino-acid polypeptide reads, in one-letter code: Homogentisate 1,2-dioxygenase (439 aa).

His293 serves as the catalytic Proton acceptor. Fe cation-binding residues include His336 and Glu342. Homogentisate is bound by residues Tyr351 and His372. His372 serves as a coordination point for Fe cation.

The protein belongs to the homogentisate dioxygenase family. As to quaternary structure, hexamer; dimer of trimers. It depends on Fe cation as a cofactor.

It carries out the reaction homogentisate + O2 = 4-maleylacetoacetate + H(+). Its pathway is amino-acid degradation; L-phenylalanine degradation; acetoacetate and fumarate from L-phenylalanine: step 4/6. In terms of biological role, involved in the catabolism of homogentisate (2,5-dihydroxyphenylacetate or 2,5-OH-PhAc), a central intermediate in the degradation of phenylalanine and tyrosine. Catalyzes the oxidative ring cleavage of the aromatic ring of homogentisate to yield maleylacetoacetate. In Cupriavidus necator (strain ATCC 17699 / DSM 428 / KCTC 22496 / NCIMB 10442 / H16 / Stanier 337) (Ralstonia eutropha), this protein is Homogentisate 1,2-dioxygenase.